Here is a 35-residue protein sequence, read N- to C-terminus: Photosystem II reaction center protein M (35 aa).

Residues 7–27 (GLLATILVILVPSIFLVILYV) form a helical membrane-spanning segment.

The protein belongs to the PsbM family. As to quaternary structure, PSII is composed of 1 copy each of membrane proteins PsbA, PsbB, PsbC, PsbD, PsbE, PsbF, PsbH, PsbI, PsbJ, PsbK, PsbL, PsbM, PsbT, PsbX, PsbY, PsbZ, Psb30/Ycf12, peripheral proteins PsbO, CyanoQ (PsbQ), PsbU, PsbV and a large number of cofactors. It forms dimeric complexes.

The protein resides in the cellular thylakoid membrane. One of the components of the core complex of photosystem II (PSII). PSII is a light-driven water:plastoquinone oxidoreductase that uses light energy to abstract electrons from H(2)O, generating O(2) and a proton gradient subsequently used for ATP formation. It consists of a core antenna complex that captures photons, and an electron transfer chain that converts photonic excitation into a charge separation. This subunit is found at the monomer-monomer interface. The sequence is that of Photosystem II reaction center protein M from Synechococcus sp. (strain JA-3-3Ab) (Cyanobacteria bacterium Yellowstone A-Prime).